Reading from the N-terminus, the 124-residue chain is Fluoride-specific ion channel FluC (124 aa).

4 helical membrane passes run 4-24 (ILFV…ISIF), 35-55 (FGTL…YALG), 70-90 (VGLL…LLLI), and 95-115 (WLKA…MVYL). Positions 74 and 77 each coordinate Na(+).

This sequence belongs to the fluoride channel Fluc/FEX (TC 1.A.43) family.

The protein localises to the cell inner membrane. It catalyses the reaction fluoride(in) = fluoride(out). Its activity is regulated as follows. Na(+) is not transported, but it plays an essential structural role and its presence is essential for fluoride channel function. In terms of biological role, fluoride-specific ion channel. Important for reducing fluoride concentration in the cell, thus reducing its toxicity. In Shewanella woodyi (strain ATCC 51908 / MS32), this protein is Fluoride-specific ion channel FluC.